A 412-amino-acid chain; its full sequence is MGQDQTKQQIEKGLQLYQANETGKALEIWQQVVERSTELPGRFRALGCLITAHSEMGKYEDMLRFAVAQSEAARQMGDPERVTEAYLNLARGHEKLCEFSEAVAYCRTCLGAEGGPLRLQFNGQVCLSMGNAFLGLSAFQKALECFEKALRYAHGNDDKMLECRVCCSLGAFYVQLKDYEKALFFPCKSAELVADYGRGWSLKYKAMSRYHMAAAYRKLGRMDDAMECCEESMKIALQHQDRPLQALCLLCFADIHRHRSDIGKALPRYESSLNIMTEIGNRLGQAHVLLNIAKCWMTEKKLDKTLGVVQKAEELADAVGNKLVLLKAHCLYETIYREMGSDQLLRDHVVKFHECMEDMELYCGLCGESIGDQNSQLQALPCSHLFHLKCLQTNGNRGCPNCKRSSVKPGYV.

Gly-2 carries the N-myristoyl glycine lipid modification. 7 TPR repeats span residues 6–39, 83–116, 123–156, 163–196, 206–239, 246–279, and 286–319; these read TKQQIEKGLQLYQANETGKALEIWQQVVERSTEL, TEAYLNLARGHEKLCEFSEAVAYCRTCLGAEGGP, GQVCLSMGNAFLGLSAFQKALECFEKALRYAHGN, CRVCCSLGAFYVQLKDYEKALFFPCKSAELVADY, AMSRYHMAAAYRKLGRMDDAMECCEESMKIALQH, ALCLLCFADIHRHRSDIGKALPRYESSLNIMTEI, and AHVLLNIAKCWMTEKKLDKTLGVVQKAEELADAV. Tyr-196 carries the post-translational modification Phosphotyrosine. The RING-type zinc finger occupies 363–403; sequence CGLCGESIGDQNSQLQALPCSHLFHLKCLQTNGNRGCPNCK. Residue Ser-405 is modified to Phosphoserine.

Belongs to the RAPsyn family.

Its subcellular location is the cell membrane. It is found in the postsynaptic cell membrane. It localises to the cytoplasm. The protein resides in the cytoskeleton. Postsynaptic protein required for clustering of nicotinic acetylcholine receptors (nAChRs) at the neuromuscular junction. It may link the receptor to the underlying postsynaptic cytoskeleton, possibly by direct association with actin or spectrin. The chain is 43 kDa receptor-associated protein of the synapse (RAPSN) from Tetronarce californica (Pacific electric ray).